We begin with the raw amino-acid sequence, 681 residues long: Fibulin-1 (681 aa).

A signal peptide spans 1–17 (MDLYMIVLLSLCGLLRA). 33 disulfide bridges follow: Cys29–Cys55, Cys30–Cys62, Cys43–Cys63, Cys72–Cys103, Cys85–Cys104, Cys106–Cys125, Cys107–Cys138, Cys114–Cys139, Cys162–Cys171, Cys167–Cys176, Cys178–Cys191, Cys197–Cys210, Cys204–Cys219, Cys225–Cys237, Cys243–Cys256, Cys250–Cys265, Cys271–Cys283, Cys289–Cys301, Cys317–Cys330, Cys336–Cys348, Cys343–Cys357, Cys359–Cys372, Cys378–Cys390, Cys386–Cys399, Cys401–Cys414, Cys420–Cys429, Cys440–Cys454, Cys460–Cys473, Cys469–Cys482, Cys484–Cys498, Cys504–Cys517, Cys511–Cys526, and Cys531–Cys553. Anaphylatoxin-like domains follow at residues 29-63 (CCED…EQCC), 68-107 (EDSI…CECC), and 108-139 (LLGS…RSCC). Residues 158–192 (TEDQCRAAGCAQRCLNGTCSCLDGFKLKTDGKHCE) enclose the EGF-like 1 domain. Residue Asn173 is glycosylated (N-linked (GlcNAc...) asparagine). Residues 193–238 (DINECLLGPHHCVTGERCINTLGSYRCQREISCGTGYELTDNNKCK) form the EGF-like 2; calcium-binding domain. An EGF-like 3; calcium-binding domain is found at 239–284 (DIDECDLGTHNCAAEMECQNTAGSFRCRPRMQCAAGFIQDALGSCI). One can recognise an EGF-like 4; calcium-binding domain in the interval 285-331 (DINECVSVTALSRGQMCFNTVGSFICQRHSVTCGRGYHLNAEGTRCV). One can recognise an EGF-like 5; calcium-binding domain in the interval 332-373 (DIDECAGPDNSCDGHGCINLVGSYRCECRTGFIFNSISRSCE). One can recognise an EGF-like 6; calcium-binding domain in the interval 374–415 (DIDECRNYPGRLCAHKCENILGSYKCSCTAGFKLADDGRNCD). In terms of domain architecture, EGF-like 7; calcium-binding spans 416 to 455 (DVNECESSPCSQGCANVYGSYQSYCRRGYQLSDADGITCE). The EGF-like 8; calcium-binding domain maps to 456 to 499 (DIDECALPTGGHICSYRCHNTPGSFHCTCPASGYTLAANGRSCQ). The region spanning 500–554 (DIDECLTGTHSCSESESCFNIQGGFRCLSFDCPANYRRSGDTRPRVDRADIIRCV) is the EGF-like 9; calcium-binding domain.

This sequence belongs to the fibulin family. In terms of assembly, homomultimerizes and interacts with various extracellular matrix components such as FN1, LAMA1, NID, AGC1 and CSPG2.

It localises to the secreted. The protein localises to the extracellular space. The protein resides in the extracellular matrix. Functionally, incorporated into fibronectin-containing matrix fibers. May play a role in cell adhesion and migration along protein fibers within the extracellular matrix (ECM). Could be important for certain developmental processes and contribute to the supramolecular organization of ECM architecture, in particular to those of basement membranes. This chain is Fibulin-1 (fbln1), found in Danio rerio (Zebrafish).